The following is a 1478-amino-acid chain: Phospholipase B1, membrane-associated (1478 aa).

The signal sequence occupies residues 1–27 (MELYPGVSPVGLLLLLLLGQGPSQIHG). The Extracellular portion of the chain corresponds to 28-1422 (SSGENTLAWQ…KAEEPSNALY (1395 aa)). Tandem repeats lie at residues 43–351 (WTLK…YKNS), 366–711 (MKEG…TKNS), 712–1058 (NLGN…FRNS), and 1068–1407 (IENW…LRNS). Positions 43 to 1407 (WTLKNFPFPC…RPFLYTLRNS (1365 aa)) are 4 X 308-326 AA approximate repeats. A glycan (N-linked (GlcNAc...) asparagine) is linked at asparagine 180. Catalysis depends on residues serine 404 and aspartate 518. 3 N-linked (GlcNAc...) asparagine glycosylation sites follow: asparagine 525, asparagine 626, and asparagine 637. Histidine 659 is a catalytic residue. N-linked (GlcNAc...) asparagine glycans are attached at residues asparagine 715, asparagine 764, asparagine 787, asparagine 801, asparagine 830, asparagine 926, asparagine 1227, asparagine 1280, asparagine 1289, and asparagine 1387. The segment at 1408-1450 (QLLPDKAEEPSNALYWAVPVAAIGGLAVGILGVMLWRTVKPVQ) is necessary for membrane localization. A helical transmembrane segment spans residues 1423–1443 (WAVPVAAIGGLAVGILGVMLW). Residues 1444–1478 (RTVKPVQQEEEEEDTLPNTSVTQDAVSEKRLKAGN) lie on the Cytoplasmic side of the membrane. A disordered region spans residues 1451 to 1478 (QEEEEEDTLPNTSVTQDAVSEKRLKAGN). The segment covering 1459–1468 (LPNTSVTQDA) has biased composition (polar residues). The segment covering 1469–1478 (VSEKRLKAGN) has biased composition (basic and acidic residues).

It belongs to the 'GDSL' lipolytic enzyme family. Phospholipase B1 subfamily. Undergoes proteolytic cleavage in the ileum.

The protein localises to the apical cell membrane. The catalysed reaction is a 1,2-diacyl-sn-glycero-3-phosphocholine + H2O = a 1-acyl-sn-glycero-3-phosphocholine + a fatty acid + H(+). It carries out the reaction a 1-O-alkyl-2-acyl-sn-glycero-3-phosphocholine + H2O = a 1-O-alkyl-sn-glycero-3-phosphocholine + a fatty acid + H(+). The enzyme catalyses a 1-acyl-sn-glycero-3-phosphocholine + H2O = sn-glycerol 3-phosphocholine + a fatty acid + H(+). It catalyses the reaction a triacylglycerol + H2O = a diacylglycerol + a fatty acid + H(+). The catalysed reaction is 1,2-dihexadecanoyl-sn-glycero-3-phosphocholine + H2O = 1-hexadecanoyl-sn-glycero-3-phosphocholine + hexadecanoate + H(+). It carries out the reaction 1-hexadecanoyl-2-(9Z-octadecenoyl)-sn-glycero-3-phosphocholine + H2O = 1-hexadecanoyl-sn-glycero-3-phosphocholine + (9Z)-octadecenoate + H(+). The enzyme catalyses 1,2-di-(9Z-octadecenoyl)-sn-glycero-3-phosphocholine + H2O = 1-(9Z-octadecenoyl)-sn-glycero-3-phosphocholine + (9Z)-octadecenoate + H(+). It catalyses the reaction 1-hexadecanoyl-2-(9Z,12Z-octadecadienoyl)-sn-glycero-3-phosphocholine + H2O = (9Z,12Z)-octadecadienoate + 1-hexadecanoyl-sn-glycero-3-phosphocholine + H(+). The catalysed reaction is 1-hexadecanoyl-2-(9Z,12Z-octadecadienoyl)-sn-glycero-3-phosphocholine + H2O = 2-(9Z,12Z-octadecadienoyl)-sn-glycero-3-phosphocholine + hexadecanoate + H(+). It carries out the reaction 1-hexadecanoyl-2-(9Z-octadecenoyl)-sn-glycero-3-phosphoethanolamine + H2O = 1-hexadecanoyl-sn-glycero-3-phosphoethanolamine + (9Z)-octadecenoate + H(+). The enzyme catalyses 1-hexadecanoyl-2-(9Z-octadecenoyl)-sn-glycero-3-phospho-(1'-sn-glycerol) + H2O = 1-hexadecanoyl-sn-glycero-3-phospho-(1'-sn-glycerol) + (9Z)-octadecenoate + H(+). It catalyses the reaction 1,2-dihexadecanoyl-sn-glycero-3-phosphocholine + 2 H2O = sn-glycerol 3-phosphocholine + 2 hexadecanoate + 2 H(+). The catalysed reaction is 1-O-hexadecyl-2-(9Z)-octadecenoyl-sn-glycero-3-phosphocholine + H2O = 1-O-hexadecyl-sn-glycero-3-phosphocholine + (9Z)-octadecenoate + H(+). It carries out the reaction 1-hexadecanoyl-sn-glycero-3-phosphocholine + H2O = sn-glycerol 3-phosphocholine + hexadecanoate + H(+). The enzyme catalyses 1,2,3-tri-(9Z-octadecenoyl)-glycerol + H2O = di-(9Z)-octadecenoylglycerol + (9Z)-octadecenoate + H(+). It catalyses the reaction 1-hexadecanoyl-2-(9Z)-octadecenoyl-3-octadecanoyl-sn-glycerol + H2O = 1-hexadecanoyl-2-(9Z-octadecenoyl)-sn-glycerol + octadecanoate + H(+). The catalysed reaction is 1,3-dihexadecanoyl-2-(9Z-octadecenoyl)glycerol + H2O = 1,3-dihexadecanoylglycerol + (9Z)-octadecenoate + H(+). It carries out the reaction 1,3-dihexadecanoyl-2-(9Z-octadecenoyl)glycerol + H2O = 1-hexadecanoyl-2-(9Z-octadecenoyl)-glycerol + hexadecanoate + H(+). The enzyme catalyses 1-hexadecanoyl-2-(9Z)-octadecenoyl-3-octadecanoyl-sn-glycerol + H2O = 1-hexadecanoyl-3-octadecanoyl-sn-glycerol + (9Z)-octadecenoate + H(+). It catalyses the reaction 1-hexadecanoyl-2-(9Z)-octadecenoyl-3-octadecanoyl-sn-glycerol + H2O = 2-(9Z-octadecenoyl)-3-octadecanoyl-sn-glycerol + hexadecanoate + H(+). The catalysed reaction is 1-octadecanoyl-2-(9Z,12Z)-octadecadienoyl-sn-glycerol + H2O = 1-octadecanoyl-sn-glycerol + (9Z,12Z)-octadecadienoate + H(+). It carries out the reaction 1,2-di-(9Z-octadecenoyl)-sn-glycerol + H2O = 1-(9Z-octadecenoyl)-sn-glycerol + (9Z)-octadecenoate + H(+). The enzyme catalyses 2,3-di-(9Z)-octadecenoyl-sn-glycerol + H2O = 3-(9Z-octadecenoyl)-sn-glycerol + (9Z)-octadecenoate + H(+). It catalyses the reaction 1,3-di-(9Z-octadecenoyl)-glycerol + H2O = 1-(9Z-octadecenoyl)-glycerol + (9Z)-octadecenoate + H(+). The catalysed reaction is 1-(9Z-octadecenoyl)-glycerol + H2O = glycerol + (9Z)-octadecenoate + H(+). It carries out the reaction 2-(9Z-octadecenoyl)-glycerol + H2O = glycerol + (9Z)-octadecenoate + H(+). Functionally, calcium-independent membrane-associated phospholipase that catalyzes complete diacylation of phospholipids by hydrolyzing both sn-1 and sn-2 fatty acyl chains attached to the glycerol backbone (phospholipase B activity). Has dual phospholipase and lysophospholipase activities toward diacylphospholipids. Preferentially cleaves sn-2 ester bonds over sn-1 bonds. Acts as a lipase toward glycerolipid substrates. Hydrolyzes fatty acyl chains of diacylglycerols with preference for the sn-2 position and of triacylglycerols with not positional selectivity. May also hydrolyze long chain retinyl esters such as retinyl palmitate. May contribute to digestion of dietary phospholipids, glycerolipids and retinoids, facilitating lipid absorption at the brush border. In Mus musculus (Mouse), this protein is Phospholipase B1, membrane-associated (Plb1).